Reading from the N-terminus, the 175-residue chain is Cytochrome c6, chloroplastic (175 aa).

Residues Cys-86, Cys-89, and His-90 each contribute to the heme c site. Heme is bound at residue 98-102 (QPGAT). Residue Met-130 participates in heme c binding.

The protein belongs to the cytochrome c family. PetJ subfamily. In terms of assembly, monomer. Interacts in vitro with LTO1. Post-translationally, binds 1 heme c group covalently per subunit.

It is found in the plastid. It localises to the chloroplast thylakoid lumen. Functions as an electron carrier between membrane-bound cytochrome b6-f and photosystem I in oxygenic photosynthesis. The polypeptide is Cytochrome c6, chloroplastic (PETJ) (Arabidopsis thaliana (Mouse-ear cress)).